The following is a 457-amino-acid chain: Aromatic amino acid permease FywP (457 aa).

A run of 12 helical transmembrane segments spans residues 16-36, 43-63, 91-111, 114-134, 154-174, 205-225, 243-263, 292-312, 342-362, 373-393, 403-423, and 424-444; these read IVMLSLGGAIGSGLFLGSGKV, SVLLSYVLAGLTLYVVMYGVG, FADWVYWATWMAVLIAEEAGV, FLAILIPGVPLWVFALVVAVL, AFIKVAVILLLIALGIYLLVI, GFLTSLLVVIFSFGGSELAAI, GVLIRIISFYVIPIFLFLHLL, IVLVIIVIAIFSAVNSAIYAT, NAILVSSFVLFIGVLLSAVLG, ISFTISIVWILLLVAALVLYF, VKLATLVVLIALSLVFIMQII, and TNPWTLSVFALVICLLSYFSY.

It belongs to the amino acid-polyamine-organocation (APC) superfamily. Amino acid transporter (AAT) (TC 2.A.3.1) family.

The protein localises to the cell membrane. Its function is as follows. Involved in phenylalanine and tyrosine uptake. Also has affinity for tryptophan. Plays no significant role in the excretion of accumulated phenylalanine. The chain is Aromatic amino acid permease FywP from Lactococcus lactis subsp. cremoris (strain MG1363).